A 178-amino-acid polypeptide reads, in one-letter code: Large ribosomal subunit protein uL6 (178 aa).

This sequence belongs to the universal ribosomal protein uL6 family. In terms of assembly, part of the 50S ribosomal subunit.

Its function is as follows. This protein binds to the 23S rRNA, and is important in its secondary structure. It is located near the subunit interface in the base of the L7/L12 stalk, and near the tRNA binding site of the peptidyltransferase center. The polypeptide is Large ribosomal subunit protein uL6 (Bacillus licheniformis (strain ATCC 14580 / DSM 13 / JCM 2505 / CCUG 7422 / NBRC 12200 / NCIMB 9375 / NCTC 10341 / NRRL NRS-1264 / Gibson 46)).